The chain runs to 170 residues: MASANPETAKPTPATVDMANPEELKKVFDQFDSNGDGKISVLELGGVFKAMGTSYTETELNRVLEEVDTDRDGYINLDEFSTLCRSSSSAAEIRDAFDLYDQDKNGLISASELHQVLNRLGMSCSVEDCTRMIGPVDADGDGNVNFEEFQKMMTSSSLLNSNGSAAPPST.

Alanine 2 is subject to N-acetylalanine. EF-hand domains follow at residues 19–54 (ANPE…MGTS), 55–85 (YTET…TLCR), 88–123 (SSAA…LGMS), and 136–159 (VDAD…SSLL). Aspartate 32, asparagine 34, aspartate 36, lysine 38, glutamate 43, aspartate 68, aspartate 70, aspartate 72, tyrosine 74, glutamate 79, aspartate 101, aspartate 103, asparagine 105, glutamate 112, aspartate 137, aspartate 139, aspartate 141, asparagine 143, and glutamate 148 together coordinate Ca(2+).

In terms of biological role, potential calcium sensor. The polypeptide is Probable calcium-binding protein CML27 (CML27) (Arabidopsis thaliana (Mouse-ear cress)).